A 192-amino-acid polypeptide reads, in one-letter code: GTP cyclohydrolase-2 (192 aa).

50–54 (RLHSE) contacts GTP. Zn(2+) is bound by residues cysteine 55, cysteine 66, and cysteine 68. Residues 92 to 94 (EGR) and threonine 114 each bind GTP. Residue aspartate 126 is the Proton acceptor of the active site. Arginine 128 (nucleophile) is an active-site residue. Positions 149 and 154 each coordinate GTP.

It belongs to the GTP cyclohydrolase II family. Zn(2+) serves as cofactor.

The catalysed reaction is GTP + 4 H2O = 2,5-diamino-6-hydroxy-4-(5-phosphoribosylamino)-pyrimidine + formate + 2 phosphate + 3 H(+). The protein operates within cofactor biosynthesis; riboflavin biosynthesis; 5-amino-6-(D-ribitylamino)uracil from GTP: step 1/4. In terms of biological role, catalyzes the conversion of GTP to 2,5-diamino-6-ribosylamino-4(3H)-pyrimidinone 5'-phosphate (DARP), formate and pyrophosphate. In Helicobacter pylori (strain Shi470), this protein is GTP cyclohydrolase-2.